Consider the following 445-residue polypeptide: Phosphoglucosamine mutase (445 aa).

Ser102 serves as the catalytic Phosphoserine intermediate. Ser102, Asp241, Asp243, and Asp245 together coordinate Mg(2+). Phosphoserine is present on Ser102.

This sequence belongs to the phosphohexose mutase family. The cofactor is Mg(2+). Post-translationally, activated by phosphorylation.

It catalyses the reaction alpha-D-glucosamine 1-phosphate = D-glucosamine 6-phosphate. Its function is as follows. Catalyzes the conversion of glucosamine-6-phosphate to glucosamine-1-phosphate. The chain is Phosphoglucosamine mutase from Salmonella paratyphi A (strain ATCC 9150 / SARB42).